Consider the following 571-residue polypeptide: MEKFLLTAPDGPPSDVERIKQESNYLRGTLKETMEDRITAGIPEDDNRLMKFHGSYLQDDRDLRAERQKQKLEPAYQFMIRVRTPGGVATPEQWLAMDELARKYANGTLKLTTRQAFQFHGVLKWNMKKTLQAINDALLTTLAACGDVNRNVMCNPNPYQSEVHAEVYEWAKRLSDHLLPQTRAYYEIWLDEEKVADTPDVEQEPIYGALYLPRKFKIGIAVPPSNDVDVFSQDLGFIAIVEHGKLAGFNVAIGGGMGMTHGDRTTYPQLAKVIGFCKPEQVIDVAEKVVTIQRDYGNRSVRKHARFKYTIDRLGLDAIKAELERRLGWELEEARPYRFEHNGDRYGWVEGVNGTWHFTLFIEGGRVKDTDDYPLMTGLREIAKVHTGDFRLTANQNLVIANVPSEKKEEMDALIQQYKLTDGKHYSALRRNSLACVALPTCGLAMAEAERYLPTLIDKIEEIVEENGLRDEEITIRMTGCPNGCARHVLGEIAFIGKSVGKYNMYLGAAFDGSRLGKLYRENIGEKEILSELRMLLSRYAKERFDGERFGDFVIRAGIVKEVTDGTNFHD.

Cysteine 436, cysteine 442, cysteine 481, and cysteine 485 together coordinate [4Fe-4S] cluster. Cysteine 485 lines the siroheme pocket.

This sequence belongs to the nitrite and sulfite reductase 4Fe-4S domain family. Alpha(8)-beta(8). The alpha component is a flavoprotein, the beta component is a hemoprotein. Siroheme serves as cofactor. [4Fe-4S] cluster is required as a cofactor.

It carries out the reaction hydrogen sulfide + 3 NADP(+) + 3 H2O = sulfite + 3 NADPH + 4 H(+). It participates in sulfur metabolism; hydrogen sulfide biosynthesis; hydrogen sulfide from sulfite (NADPH route): step 1/1. Functionally, component of the sulfite reductase complex that catalyzes the 6-electron reduction of sulfite to sulfide. This is one of several activities required for the biosynthesis of L-cysteine from sulfate. The sequence is that of Sulfite reductase [NADPH] hemoprotein beta-component from Anoxybacillus flavithermus (strain DSM 21510 / WK1).